Reading from the N-terminus, the 20-residue chain is Alpha-amylase (20 aa).

It carries out the reaction Endohydrolysis of (1-&gt;4)-alpha-D-glucosidic linkages in polysaccharides containing three or more (1-&gt;4)-alpha-linked D-glucose units.. With respect to regulation, strongly inhibited by Hg (2+). Inhibited by Zn (2+). Activated by Fe (2+), Mg (2+) and Ba (2+). Functionally, alpha-amylase active towards amylose, starch, amylopectin and maltodextrins. Has lower activity towards glycogen, and is not active towards alpha/beta-cyclodextrin. The protein is Alpha-amylase of Bacillus sp.